A 295-amino-acid polypeptide reads, in one-letter code: Elongation factor Ts (295 aa).

An involved in Mg(2+) ion dislocation from EF-Tu region spans residues 79-82 (TDFV).

The protein belongs to the EF-Ts family.

Its subcellular location is the cytoplasm. Functionally, associates with the EF-Tu.GDP complex and induces the exchange of GDP to GTP. It remains bound to the aminoacyl-tRNA.EF-Tu.GTP complex up to the GTP hydrolysis stage on the ribosome. The protein is Elongation factor Ts of Bacillus cytotoxicus (strain DSM 22905 / CIP 110041 / 391-98 / NVH 391-98).